The primary structure comprises 628 residues: MPRSALSVISFCHRLGKQERKRSFMGNSSNSWSHTPFPKLELGLGSRPTAPREPPACSICLERPREPISLDCGHDFCPRCFSTHRVPGCGPPCCPECRKTCKRRKGLRGLGERMRLLPQRPLPAAALQETCAVRAEPLLLVRINASGGLILRMGAINRCLKHPLARDTPVCLLAVLGGPHSGKTFLLNHLLQGLPGLASGEGSWPRSAGSGQGFRWGANGLSRGIWMWSHPFLLGKEGRKVAVFLVDTGDVMSPELSRETRTRLCALTSMLSSYQILTASQELKDTDLEHLETFVHVAEVMGRHYGMVPIQHLDLLVRDSSHPSKAWQGHVGDVIQKSSGKYPKVQGLLQGRRARCYLLPAPGRRWASRGHGSSGDDDAGRLRAYVADVLSAAPQHAKSRCPGYWSEGRPAARGDRRLLTGQQLAQEVKNLSGWMGRTGPSCASPDEMAAQLHDLRTVEAAKKEFEEYVRQQDAATKRIFSALRVLPDTMRNLLSAQKDTLLARHGATLLCTGREQTLEALEAELQAEAKAFMDSYTVRFCGHLAAVGGAVGAGLMGLAGGVVGAGMAAAALAAEAGMVAAGAAVGATGAAVVGGGVGAGLAATVGCMEKEEDERVQEGDREPLLQEE.

The RING-type zinc-finger motif lies at 57–98; it reads CSICLERPREPISLDCGHDFCPRCFSTHRVPGCGPPCCPECR. Residues 132–628 form an interaction with ZBTB16 region; sequence AVRAEPLLLV…GDREPLLQEE (497 aa). One can recognise a GB1/RHD3-type G domain in the interval 167 to 409; the sequence is DTPVCLLAVL…RCPGYWSEGR (243 aa). 318-319 serves as a coordination point for GTP; that stretch reads RD. 2 helical membrane-spanning segments follow: residues 544–564 and 577–597; these read LAAV…GVVG and GMVA…GGGV.

It belongs to the TRAFAC class dynamin-like GTPase superfamily. GB1/RHD3 GTPase family. GB1 subfamily. In terms of assembly, self-associates. Interacts with SP1 in an oxidative stress-regulated manner. Interacts with SIGMAR1 in an oxidative stress-regulated manner. Interacts with ZBTB16 (via C2H2-type zinc finger domains 1 and 2). Auto-ubiquitinated.

It is found in the membrane. The protein resides in the cytoplasm. It localises to the nucleus. The protein localises to the nuclear body. Its subcellular location is the nucleoplasm. It is found in the endosome. The protein resides in the cytoplasmic vesicle. It localises to the secretory vesicle. The protein localises to the synaptic vesicle. Its subcellular location is the postsynaptic density. It is found in the perikaryon. The protein resides in the cell projection. It localises to the neuron projection. It carries out the reaction S-ubiquitinyl-[E2 ubiquitin-conjugating enzyme]-L-cysteine + [acceptor protein]-L-lysine = [E2 ubiquitin-conjugating enzyme]-L-cysteine + N(6)-ubiquitinyl-[acceptor protein]-L-lysine.. The protein operates within protein modification; protein ubiquitination. In terms of biological role, E3 ubiquitin-protein ligase that plays an important role in neuronal differentiation, including neurogenesis and gliogenesis, during brain development. During embryonic development initiates neuronal differentiation by inducing cell cycle arrest at the G0/G1 phase through up-regulation of cell-cycle regulatory proteins. Plays a role not only in the fetal period during the development of the nervous system, but also in the adult brain, where it is involved in the maintenance of neural functions and protection of the nervous tissue cells from oxidative stress-induced damage. Exhibits GTPase and E3 ubiquitin-protein ligase activities. Regulates dendritic spine density and synaptic neurotransmission; its ability to hydrolyze GTP is involved in the maintenance of dendritic spine density. In Bos taurus (Bovine), this protein is RING finger protein 112 (RNF112).